The chain runs to 211 residues: MAKTHEIKVERRADEGKGASRRLRHAGVIPAIVYGGELEPVSIQLNHEQIWLAQQNEWFYSSILDLNLNGDVQQVLLRDMQRHPFKQLIMHIDFQRVSANEKLSAAVPLHFINEASSPAGKSSEVVVTHELNEVQVVCLPKDLPEFIEVDLGALEVGNVIHLSEIKLPAGVEIPELKLGKEHDVAVVAAKHVRIEEDDAAGEEGSEGAETK.

Belongs to the bacterial ribosomal protein bL25 family. CTC subfamily. Part of the 50S ribosomal subunit; part of the 5S rRNA/L5/L18/L25 subcomplex. Contacts the 5S rRNA. Binds to the 5S rRNA independently of L5 and L18.

Its function is as follows. This is one of the proteins that binds to the 5S RNA in the ribosome where it forms part of the central protuberance. The sequence is that of Large ribosomal subunit protein bL25 from Xanthomonas axonopodis pv. citri (strain 306).